Here is a 116-residue protein sequence, read N- to C-terminus: NADH-ubiquinone oxidoreductase chain 3 (116 aa).

3 consecutive transmembrane segments (helical) span residues 4 to 24 (IIFLFSITIAVAVVLGLAAHA), 56 to 76 (FFLVAILFLLFDLEIALLFPL), and 88 to 108 (LIPISMVFMVILTLGLVFEWI).

This sequence belongs to the complex I subunit 3 family.

Its subcellular location is the mitochondrion membrane. It carries out the reaction a ubiquinone + NADH + 5 H(+)(in) = a ubiquinol + NAD(+) + 4 H(+)(out). Functionally, core subunit of the mitochondrial membrane respiratory chain NADH dehydrogenase (Complex I) that is believed to belong to the minimal assembly required for catalysis. Complex I functions in the transfer of electrons from NADH to the respiratory chain. The immediate electron acceptor for the enzyme is believed to be ubiquinone. The chain is NADH-ubiquinone oxidoreductase chain 3 (ND3) from Strongylocentrotus purpuratus (Purple sea urchin).